A 224-amino-acid polypeptide reads, in one-letter code: NBPF family member NBPF6-like protein (224 aa).

Positions 159–224 (ENHHDRKDEE…ASVCDVQDQL (66 aa)) constitute an Olduvai domain. Basic and acidic residues predominate over residues 198 to 209 (YLTHSSHHDSHR). The segment at 198–224 (YLTHSSHHDSHRPPSSIASVCDVQDQL) is disordered.

The protein belongs to the NBPF family.

In Bos taurus (Bovine), this protein is NBPF family member NBPF6-like protein.